The primary structure comprises 502 residues: Mannitol 2-dehydrogenase (502 aa).

37 to 48 serves as a coordination point for NAD(+); the sequence is IVHIGVGGFHRA.

The protein belongs to the mannitol dehydrogenase family. Monomer.

It carries out the reaction D-mannitol + NAD(+) = D-fructose + NADH + H(+). Functionally, catalyzes the NAD(H)-dependent interconversion of D-fructose and D-mannitol in the mannitol metabolic pathway. The sequence is that of Mannitol 2-dehydrogenase from Neosartorya fischeri (strain ATCC 1020 / DSM 3700 / CBS 544.65 / FGSC A1164 / JCM 1740 / NRRL 181 / WB 181) (Aspergillus fischerianus).